The following is a 273-amino-acid chain: Pantothenate synthetase (273 aa).

27–34 (MGALHEGH) serves as a coordination point for ATP. His34 (proton donor) is an active-site residue. Gln58 lines the (R)-pantoate pocket. Gln58 contributes to the beta-alanine binding site. ATP is bound at residue 144–147 (GKKD). A (R)-pantoate-binding site is contributed by Gln150. Residues Val173 and 181–184 (LSSR) contribute to the ATP site.

This sequence belongs to the pantothenate synthetase family. As to quaternary structure, homodimer.

Its subcellular location is the cytoplasm. It catalyses the reaction (R)-pantoate + beta-alanine + ATP = (R)-pantothenate + AMP + diphosphate + H(+). It participates in cofactor biosynthesis; (R)-pantothenate biosynthesis; (R)-pantothenate from (R)-pantoate and beta-alanine: step 1/1. Functionally, catalyzes the condensation of pantoate with beta-alanine in an ATP-dependent reaction via a pantoyl-adenylate intermediate. The chain is Pantothenate synthetase from Sulfurimonas denitrificans (strain ATCC 33889 / DSM 1251) (Thiomicrospira denitrificans (strain ATCC 33889 / DSM 1251)).